The chain runs to 70 residues: U2-agatoxin-Ao1j (70 aa).

Residues 1 to 20 form the signal peptide; it reads MRAIISLLLISAMVFSMIAA. Residues 21-34 constitute a propeptide that is removed on maturation; the sequence is VPEEEGLQLSEDER. Disulfide bonds link Cys-37–Cys-53, Cys-44–Cys-58, and Cys-52–Cys-68. Position 69 is a leucine amide (Leu-69).

It belongs to the neurotoxin 01 (U2-agtx) family. Expressed by the venom gland.

The protein resides in the secreted. Functionally, insect active toxin causing rapid but reversible paralysis in crickets. No activity shown in mammals. Does not show effect on mammalian voltage-gated calcium channels. The protein is U2-agatoxin-Ao1j of Agelena orientalis (Funnel-web spider).